The primary structure comprises 540 residues: Chaperonin GroEL (540 aa).

ATP is bound by residues 30–33 (TLGP), Lys-51, 87–91 (DGTTT), Gly-415, and Asp-496.

The protein belongs to the chaperonin (HSP60) family. As to quaternary structure, forms a cylinder of 14 subunits composed of two heptameric rings stacked back-to-back. Interacts with the co-chaperonin GroES.

It is found in the cytoplasm. The enzyme catalyses ATP + H2O + a folded polypeptide = ADP + phosphate + an unfolded polypeptide.. Together with its co-chaperonin GroES, plays an essential role in assisting protein folding. The GroEL-GroES system forms a nano-cage that allows encapsulation of the non-native substrate proteins and provides a physical environment optimized to promote and accelerate protein folding. The polypeptide is Chaperonin GroEL (Thermodesulfovibrio yellowstonii (strain ATCC 51303 / DSM 11347 / YP87)).